A 1089-amino-acid chain; its full sequence is Pentatricopeptide repeat-containing protein MRL1, chloroplastic (1089 aa).

The transit peptide at 1-72 (MEVTSTTFIS…SIRSPRLVVR (72 aa)) directs the protein to the chloroplast. PPR repeat units lie at residues 466–500 (TMSTFNMLMSVCASSQDIEGARGVLRLVQESGMTA), 501–535 (DCKLYTTLISSCAKSGKVDAMFEVFHQMSNSGVEA), 536–570 (NLHTFGALIDGCARAGQVAKAFGAYGILRSKNVKP), 571–605 (DRVVFNALISACGQSGAVDRAFDVLAEMKAETHPI), 608–642 (DHISIGALMKACCNAGQVERAKEVYQMIHKYGIRG), 643–677 (TPEVYTIAVNSCSKSGDWDFACSIYKDMKEKDVTP), 678–712 (DEVFFSALIDVAGHAKMLDEAFGILQDAKSQGIRL), 713–747 (GTISYSSLMGACCNAKDWKKALELYEKIKSIKLRP), 748–782 (TISTMNALITALCEGNQLPKAMEYLDEIKTLGLKP), and 783–817 (NTITYSMLMLASERKDDFEVSFKLLSQAKGDGVSP).

Belongs to the PPR family. P subfamily. Expressed in stems, leaves and sepals.

The protein resides in the plastid. It localises to the chloroplast. Functionally, regulator of the large subunit (LS) of RuBisCO. Involved either in the processing or in the stabilization of the processed transcript, probably by acting as a barrier to the 5'&gt;3' degradation. The polypeptide is Pentatricopeptide repeat-containing protein MRL1, chloroplastic (MRL1) (Arabidopsis thaliana (Mouse-ear cress)).